Reading from the N-terminus, the 479-residue chain is Calcium-dependent mitochondrial ATP-magnesium/phosphate carrier protein 3 (479 aa).

The Mitochondrial intermembrane portion of the chain corresponds to 1-208 (MESSKPKNRN…ISKHVKRSRL (208 aa)). EF-hand domains lie at 33 to 68 (EREIRIRSLFDFFDNSNLGFLDYAQIEKGLASLQIP), 69 to 104 (PEYKYARDLFRVCDANRDGRVDYQEFRRYIDAKELE), 105 to 135 (LYRIFQAIDVEHNGCILPEELWEALVKAGIE), and 136 to 171 (IDDEELARFVEHVDKDNNGTITFEEWRDFLLLYPHE). Residues Asp-82, Asn-84, Asp-86, Arg-88, and Glu-93 each contribute to the Ca(2+) site. Positions 149, 151, 153, 155, and 160 each coordinate Ca(2+). Solcar repeat units follow at residues 203–286 (VKRS…LKPM), 294–381 (IGTS…LKDL), and 392–475 (PGPL…MKKN). The helical transmembrane segment at 209 to 226 (LLAGGLAGAVSRTATAPL) threads the bilayer. The Mitochondrial matrix segment spans residues 227 to 260 (DRLKVVLQVQRAHAGVLPTIKKIWREDKLMGFFR). A helical membrane pass occupies residues 261 to 280 (GNGLNVMKVAPESAIKFCAY). At 281 to 303 (EMLKPMIGGEDGDIGTSGRLMAG) the chain is on the mitochondrial intermembrane side. A helical membrane pass occupies residues 304 to 317 (GMAGALAQTAIYPM). Topologically, residues 318-355 (DLVKTRLQTCVSEGGKAPKLWKLTKDIWVREGPRAFYK) are mitochondrial matrix. A helical membrane pass occupies residues 356-375 (GLFPSLLGIVPYAGIDLAAY). Residues 376-397 (ETLKDLSRTYILQDTEPGPLIQ) are Mitochondrial intermembrane-facing. Residues 398–415 (LSCGMTSGALGASCVYPL) traverse the membrane as a helical segment. Topologically, residues 416–449 (QVVRTRMQADSSKTTMKQEFMNTMKGEGLRGFYR) are mitochondrial matrix. Residues 450 to 469 (GLLPNLLKVVPAASITYIVY) form a helical membrane-spanning segment. Residues 470 to 479 (EAMKKNMALD) lie on the Mitochondrial intermembrane side of the membrane.

The protein belongs to the mitochondrial carrier (TC 2.A.29) family. In terms of tissue distribution, expressed in flowers, leaves, stems, roots and seedlings, mostly in seedlings.

It is found in the mitochondrion inner membrane. Its activity is regulated as follows. Counter-exchange transport activity is saturable and inhibited by pyridoxal-5'-phosphate, EDTA and EGTA. Activated by calcium Ca(2+) and manganese Mn(2+) ions, and slightly by iron Fe(2+) and zinc Zn(2+) ions. Repressed by copper ions Cu(2+) and slightly by magnesium Mg(2+) ions. Magnesium Mg(2+) ions promotes slightly ATP uptake, ATP-Mg(2+) being exchanged with ATP(4-). Functionally, calcium-dependent mitochondrial carrier protein that catalyzes the import of ATP co-transported with metal divalent cations across the mitochondrial inner membrane in exchange for phosphate (Pi). Can transport phosphate, AMP, ADP, ATP, adenosine 5'-phosphosulfate, sulfate and thiosulfate, and, to a lesser extent, other nucleotides. Binds calcium ions Ca(2+). Also mediates calcium uptake. The polypeptide is Calcium-dependent mitochondrial ATP-magnesium/phosphate carrier protein 3 (Arabidopsis thaliana (Mouse-ear cress)).